The following is a 637-amino-acid chain: tRNA uridine 5-carboxymethylaminomethyl modification enzyme MnmG (637 aa).

Residues 15–20 (GAGHAG), isoleucine 127, and serine 182 contribute to the FAD site. 276-290 (GPRYCPSIEDKIVRF) is an NAD(+) binding site. An FAD-binding site is contributed by glutamine 373.

It belongs to the MnmG family. In terms of assembly, homodimer. Heterotetramer of two MnmE and two MnmG subunits. It depends on FAD as a cofactor.

It localises to the cytoplasm. NAD-binding protein involved in the addition of a carboxymethylaminomethyl (cmnm) group at the wobble position (U34) of certain tRNAs, forming tRNA-cmnm(5)s(2)U34. This chain is tRNA uridine 5-carboxymethylaminomethyl modification enzyme MnmG, found in Streptococcus pneumoniae (strain ATCC BAA-255 / R6).